Here is a 242-residue protein sequence, read N- to C-terminus: Type III pantothenate kinase (242 aa).

5 to 12 provides a ligand contact to ATP; that stretch reads DLGNTRLK. Substrate is bound by residues Tyr-94 and 100–103; that span reads GCDR. Asp-102 serves as the catalytic Proton acceptor. Thr-124 contacts ATP. Thr-175 lines the substrate pocket.

Belongs to the type III pantothenate kinase family. Homodimer. The cofactor is NH4(+). K(+) is required as a cofactor.

Its subcellular location is the cytoplasm. The catalysed reaction is (R)-pantothenate + ATP = (R)-4'-phosphopantothenate + ADP + H(+). It functions in the pathway cofactor biosynthesis; coenzyme A biosynthesis; CoA from (R)-pantothenate: step 1/5. In terms of biological role, catalyzes the phosphorylation of pantothenate (Pan), the first step in CoA biosynthesis. This Psychrobacter cryohalolentis (strain ATCC BAA-1226 / DSM 17306 / VKM B-2378 / K5) protein is Type III pantothenate kinase.